The chain runs to 200 residues: Integrin beta-1-binding protein 1 (200 aa).

The segment covering 1–10 has biased composition (basic residues); the sequence is MFRKGKKRHS. Residues 1–56 form a disordered region; that stretch reads MFRKGKKRHSSSSSQSSEISTKSKSVDSSLGGLSRSSTVASLDTDSTKSSGQSNNN. Positions 6–7 match the Nuclear localization signal motif; it reads KK. The span at 11–29 shows a compositional bias: low complexity; that stretch reads SSSSQSSEISTKSKSVDSS. The span at 34–56 shows a compositional bias: polar residues; that stretch reads SRSSTVASLDTDSTKSSGQSNNN. A Phosphothreonine; by CaMK2 modification is found at Thr38. At Ser41 the chain carries Phosphoserine. The PID domain maps to 58–200; it reads DTCAEFRIKY…FDSVLTSEKP (143 aa). The interaction with KRIT1 stretch occupies residues 136 to 139; sequence YLII. An interaction with ITGB1 region spans residues 139-141; that stretch reads IRM.

Interacts (via N-terminus and PTB domain) with ROCK1. Found in a complex, at least composed of ITGB1BP1, KRIT1 and RAP1A. Interacts (via C-terminal region) with ITGB1 (via C-terminal cytoplasmic tail); the interaction prevents talin TLN1 binding to ITGB1 and KRIT1 and ITGB1 compete for the same binding site. Interacts with KRIT1 (via N-terminal NPXY motif); the interaction induces the opening conformation of KRIT1 and KRIT1 and ITGB1 compete for the same binding site. Isoform 2 does not interact with ITGB1. Interacts with CDC42 (GTP- or GDP-bound form); the interaction is increased with the CDC42-membrane bound forms and prevents both CDC42 activation and cell spreading. Interacts (via C-terminal domain region) with NME2. Interacts with FERMT2 and RAC1. In terms of processing, phosphorylation at Thr-38 seems to enhance integrin alpha5beta1-mediated cell adhesion. The degree of phosphorylation is regulated by integrin-dependent cell-matrix interaction.

The protein localises to the nucleus. It localises to the cytoplasm. Its subcellular location is the cytoskeleton. The protein resides in the cell membrane. It is found in the cell projection. The protein localises to the lamellipodium. It localises to the ruffle. In terms of biological role, key regulator of the integrin-mediated cell-matrix interaction signaling by binding to the ITGB1 cytoplasmic tail and preventing the activation of integrin alpha-5/beta-1 (heterodimer of ITGA5 and ITGB1) by talin or FERMT1. Plays a role in cell proliferation, differentiation, spreading, adhesion and migration in the context of mineralization and bone development and angiogenesis. Stimulates cellular proliferation in a fibronectin-dependent manner. Involved in the regulation of beta-1 integrin-containing focal adhesion (FA) site dynamics by controlling its assembly rate during cell adhesion; inhibits beta-1 integrin clustering within FA by directly competing with talin TLN1, and hence stimulates osteoblast spreading and migration in a fibronectin- and/or collagen-dependent manner. Acts as a guanine nucleotide dissociation inhibitor (GDI) by regulating Rho family GTPases during integrin-mediated cell matrix adhesion; reduces the level of active GTP-bound form of both CDC42 and RAC1 GTPases upon cell adhesion to fibronectin. Stimulates the release of active CDC42 from the membranes to maintain it in an inactive cytoplasmic pool. Participates in the translocation of the Rho-associated protein kinase ROCK1 to membrane ruffles at cell leading edges of the cell membrane, leading to an increase of myoblast cell migration on laminin. Plays a role in bone mineralization at a late stage of osteoblast differentiation; modulates the dynamic formation of focal adhesions into fibrillar adhesions, which are adhesive structures responsible for fibronectin deposition and fibrillogenesis. Plays a role in blood vessel development; acts as a negative regulator of angiogenesis by attenuating endothelial cell proliferation and migration, lumen formation and sprouting angiogenesis by promoting AKT phosphorylation and inhibiting ERK1/2 phosphorylation through activation of the Notch signaling pathway. Promotes transcriptional activity of the MYC promoter. The sequence is that of Integrin beta-1-binding protein 1 (ITGB1BP1) from Bos taurus (Bovine).